A 784-amino-acid chain; its full sequence is Melanoma-associated antigen D1 (784 aa).

Residues 41–67 are disordered; it reads PTNQATAAASGPNASPQSSQPPSANEV. The segment covering 47-65 has biased composition (low complexity); that stretch reads AAASGPNASPQSSQPPSAN. A Phosphotyrosine modification is found at Tyr-97. Composition is skewed to polar residues over residues 195–214, 232–246, 259–269, and 306–320; these read PTAETQTQNINQAKMATSQA, AQTSADGSQAQNLES, NNLNVEESSSG, and LAWQNPSGWQNQPAR. The disordered stretch occupies residues 195 to 339; the sequence is PTAETQTQNI…PARQTPPAWQ (145 aa). 19 repeat units span residues 302-307, 308-313, 314-319, 338-343, 344-349, 350-355, 356-361, 362-367, 368-373, 374-379, 380-385, 386-391, 392-397, 398-403, 404-409, 410-415, 416-421, 422-427, and 428-433. Positions 302-450 are 22 X 6 AA tandem repeats of W-[PQ]-X-P-X-X; sequence WQTPLAWQNP…VPPDWQNLRP (149 aa). A disordered region spans residues 379 to 418; sequence AWQNPPGWQTPPGWQTPPGWQGPPDWQGPPDWPLPPDWPL. Over residues 383-403 the composition is skewed to low complexity; sequence PPGWQTPPGWQTPPGWQGPPD. Positions 404–418 are enriched in pro residues; it reads WQGPPDWPLPPDWPL. One copy of the 20; approximate repeat lies at 434–438; it reads WIPTD. 2 repeat units span residues 439–444 and 445–450. The disordered stretch occupies residues 441–471; sequence VPPDWQNLRPSPNLRPSPNSRASQNLGASQP. Positions 447-461 are enriched in low complexity; that stretch reads NLRPSPNLRPSPNSR. One can recognise an MAGE domain in the interval 477 to 675; the sequence is LQERANKLVK…RDWTAQFMEA (199 aa).

In terms of assembly, interacts with DLX5, DLX7 and MSX2 and forms homomultimers. Interacts with UNC5A. Interacts with TRIM28 and PJA1. Interacts with NGFR/p75NTR and RORA.

The protein localises to the cytoplasm. It is found in the cell membrane. Its subcellular location is the nucleus. Its function is as follows. Involved in the apoptotic response after nerve growth factor (NGF) binding in neuronal cells. Inhibits cell cycle progression, and facilitates NGFR-mediated apoptosis. May act as a regulator of the function of DLX family members. May enhance ubiquitin ligase activity of RING-type zinc finger-containing E3 ubiquitin-protein ligases. Proposed to act through recruitment and/or stabilization of the Ubl-conjugating enzyme (E2) at the E3:substrate complex. Plays a role in the circadian rhythm regulation. May act as RORA co-regulator, modulating the expression of core clock genes such as BMAL1 and NFIL3, induced, or NR1D1, repressed. The protein is Melanoma-associated antigen D1 (MAGED1) of Sus scrofa (Pig).